Consider the following 363-residue polypeptide: Fructose-1,6-bisphosphatase 1 (363 aa).

N-acetylvaline is present on Val2. Residues 18 to 22 and 28 to 32 contribute to the AMP site; these read VLEEG and TGEMT. The Mg(2+) site is built by Asp69 and Glu98. 113 to 114 serves as a coordination point for AMP; the sequence is KY. 3 residues coordinate Mg(2+): Asp119, Leu121, and Asp122. Residue 122–125 participates in substrate binding; the sequence is DGSS. Position 141 (Arg141) interacts with AMP. At Lys151 the chain carries N6-succinyllysine. Substrate-binding positions include 213–216, 244–249, Tyr265, and 275–277; these read NEGY, RYVGSM, and KLR. Phosphotyrosine is present on residues Tyr216, Tyr245, and Tyr265. Glu281 contacts Mg(2+). 2 positions are modified to phosphoserine: Ser339 and Ser353.

This sequence belongs to the FBPase class 1 family. Homotetramer. Requires Mg(2+) as cofactor.

The catalysed reaction is beta-D-fructose 1,6-bisphosphate + H2O = beta-D-fructose 6-phosphate + phosphate. It participates in carbohydrate biosynthesis; gluconeogenesis. Subject to complex allosteric regulation. The enzyme can assume an active R-state, or an inactive T-state. Intermediate conformations may exist. AMP acts as an allosteric inhibitor. AMP binding affects the turnover of bound substrate and not the affinity for substrate. Fructose 2,6-bisphosphate acts as a competitive inhibitor. Fructose 2,6-bisphosphate and AMP have synergistic effects. Catalyzes the hydrolysis of fructose 1,6-bisphosphate to fructose 6-phosphate in the presence of divalent cations, acting as a rate-limiting enzyme in gluconeogenesis. Plays a role in regulating glucose sensing and insulin secretion of pancreatic beta-cells. Appears to modulate glycerol gluconeogenesis in liver. Important regulator of appetite and adiposity; increased expression of the protein in liver after nutrient excess increases circulating satiety hormones and reduces appetite-stimulating neuropeptides and thus seems to provide a feedback mechanism to limit weight gain. The protein is Fructose-1,6-bisphosphatase 1 (Fbp1) of Rattus norvegicus (Rat).